The following is a 70-amino-acid chain: Large ribosomal subunit protein bL33m (70 aa).

Belongs to the bacterial ribosomal protein bL33 family. As to quaternary structure, component of the mitochondrial large ribosomal subunit (mt-LSU). Mature yeast 74S mitochondrial ribosomes consist of a small (37S) and a large (54S) subunit. The 37S small subunit contains a 15S ribosomal RNA (15S mt-rRNA) and 34 different proteins. The 54S large subunit contains a 21S rRNA (21S mt-rRNA) and 46 different proteins. bL33m stabilizes the tRNA acceptor stem in the E-site.

The protein resides in the mitochondrion. Component of the mitochondrial ribosome (mitoribosome), a dedicated translation machinery responsible for the synthesis of mitochondrial genome-encoded proteins, including at least some of the essential transmembrane subunits of the mitochondrial respiratory chain. The mitoribosomes are attached to the mitochondrial inner membrane and translation products are cotranslationally integrated into the membrane. This chain is Large ribosomal subunit protein bL33m (MRPL39), found in Saccharomyces cerevisiae (strain ATCC 204508 / S288c) (Baker's yeast).